The sequence spans 159 residues: Stress-induced protein 1 (159 aa).

Positions 33–141 (NNFNNIVPQQ…TVRALPIHTS (109 aa)) constitute a sHSP domain.

The protein belongs to the small heat shock protein (HSP20) family.

This is Stress-induced protein 1 from Caenorhabditis elegans.